The sequence spans 295 residues: Pyridoxal 5'-phosphate synthase subunit PdxS (295 aa).

Aspartate 25 is a binding site for D-ribose 5-phosphate. Catalysis depends on lysine 82, which acts as the Schiff-base intermediate with D-ribose 5-phosphate. Glycine 154 is a D-ribose 5-phosphate binding site. D-glyceraldehyde 3-phosphate is bound at residue arginine 166. Residues glycine 215 and 236–237 each bind D-ribose 5-phosphate; that span reads GS.

The protein belongs to the PdxS/SNZ family. In the presence of PdxT, forms a dodecamer of heterodimers.

It carries out the reaction aldehydo-D-ribose 5-phosphate + D-glyceraldehyde 3-phosphate + L-glutamine = pyridoxal 5'-phosphate + L-glutamate + phosphate + 3 H2O + H(+). The protein operates within cofactor biosynthesis; pyridoxal 5'-phosphate biosynthesis. Its function is as follows. Catalyzes the formation of pyridoxal 5'-phosphate from ribose 5-phosphate (RBP), glyceraldehyde 3-phosphate (G3P) and ammonia. The ammonia is provided by the PdxT subunit. Can also use ribulose 5-phosphate and dihydroxyacetone phosphate as substrates, resulting from enzyme-catalyzed isomerization of RBP and G3P, respectively. The sequence is that of Pyridoxal 5'-phosphate synthase subunit PdxS from Natranaerobius thermophilus (strain ATCC BAA-1301 / DSM 18059 / JW/NM-WN-LF).